We begin with the raw amino-acid sequence, 472 residues long: Tryptophanase (472 aa).

N6-(pyridoxal phosphate)lysine is present on Lys-270.

The protein belongs to the beta-eliminating lyase family. Homotetramer. It depends on pyridoxal 5'-phosphate as a cofactor.

It carries out the reaction L-tryptophan + H2O = indole + pyruvate + NH4(+). It participates in amino-acid degradation; L-tryptophan degradation via pyruvate pathway; indole and pyruvate from L-tryptophan: step 1/1. The polypeptide is Tryptophanase (Haemophilus influenzae (strain 86-028NP)).